The primary structure comprises 473 residues: Cysteine--tRNA ligase (473 aa).

Cys-27 is a Zn(2+) binding site. Residues 29 to 39 (ITPYDHMHVGH) carry the 'HIGH' region motif. Zn(2+) contacts are provided by Cys-213, His-238, and Glu-242. A 'KMSKS' region motif is present at residues 271–275 (KMSKS). Lys-274 serves as a coordination point for ATP.

It belongs to the class-I aminoacyl-tRNA synthetase family. The cofactor is Zn(2+).

Its subcellular location is the cytoplasm. It carries out the reaction tRNA(Cys) + L-cysteine + ATP = L-cysteinyl-tRNA(Cys) + AMP + diphosphate. The protein is Cysteine--tRNA ligase of Pyrobaculum islandicum (strain DSM 4184 / JCM 9189 / GEO3).